We begin with the raw amino-acid sequence, 660 residues long: V-type ATP synthase subunit I (660 aa).

Helical transmembrane passes span 312–332 (FFAFVLFFSMIVNDAGYGLLF), 362–382 (ILGLGCICWGTTTTSFFGMSF), 453–473 (FIDNILMELALFIGVVHLSLG), 485–505 (IGWILFMVSAYLYVPIYLGTV), 520–540 (GQIGYYGMFGGIGLAVVLAMI), 560–580 (VLSYLRIYALGLAGAMMGATF), and 593–613 (SIVILLGHSVNIILSIMGGVI).

It belongs to the V-ATPase 116 kDa subunit family.

Its subcellular location is the cell membrane. Produces ATP from ADP in the presence of a proton gradient across the membrane. In Chlamydia pneumoniae (Chlamydophila pneumoniae), this protein is V-type ATP synthase subunit I (atpI).